Reading from the N-terminus, the 142-residue chain is Large ribosomal subunit protein uL13 (142 aa).

It belongs to the universal ribosomal protein uL13 family. In terms of assembly, part of the 50S ribosomal subunit.

In terms of biological role, this protein is one of the early assembly proteins of the 50S ribosomal subunit, although it is not seen to bind rRNA by itself. It is important during the early stages of 50S assembly. This Pyrococcus furiosus (strain ATCC 43587 / DSM 3638 / JCM 8422 / Vc1) protein is Large ribosomal subunit protein uL13.